Reading from the N-terminus, the 227-residue chain is Cytochrome c oxidase subunit 2 (227 aa).

Residues 1 to 14 (MAYPFQLGLQDATS) are Mitochondrial intermembrane-facing. The helical transmembrane segment at 15 to 45 (PIMEELLHFHDHTLMIVFLISSLVLYIISLM) threads the bilayer. The Mitochondrial matrix portion of the chain corresponds to 46 to 59 (LTTKLTHTSTMDAQ). The chain crosses the membrane as a helical span at residues 60-87 (EVETVWTILPAIILILIALPSLRILYMM). Topologically, residues 88 to 227 (DEINNPSLTV…YFETWSALMV (140 aa)) are mitochondrial intermembrane. Cu cation is bound by residues H161, C196, E198, C200, H204, and M207. Residue E198 coordinates Mg(2+). Phosphotyrosine is present on Y218.

The protein belongs to the cytochrome c oxidase subunit 2 family. In terms of assembly, component of the cytochrome c oxidase (complex IV, CIV), a multisubunit enzyme composed of 14 subunits. The complex is composed of a catalytic core of 3 subunits MT-CO1, MT-CO2 and MT-CO3, encoded in the mitochondrial DNA, and 11 supernumerary subunits COX4I, COX5A, COX5B, COX6A, COX6B, COX6C, COX7A, COX7B, COX7C, COX8 and NDUFA4, which are encoded in the nuclear genome. The complex exists as a monomer or a dimer and forms supercomplexes (SCs) in the inner mitochondrial membrane with NADH-ubiquinone oxidoreductase (complex I, CI) and ubiquinol-cytochrome c oxidoreductase (cytochrome b-c1 complex, complex III, CIII), resulting in different assemblies (supercomplex SCI(1)III(2)IV(1) and megacomplex MCI(2)III(2)IV(2)). Found in a complex with TMEM177, COA6, COX18, COX20, SCO1 and SCO2. Interacts with TMEM177 in a COX20-dependent manner. Interacts with COX20. Interacts with COX16. Requires Cu cation as cofactor.

It is found in the mitochondrion inner membrane. It carries out the reaction 4 Fe(II)-[cytochrome c] + O2 + 8 H(+)(in) = 4 Fe(III)-[cytochrome c] + 2 H2O + 4 H(+)(out). Functionally, component of the cytochrome c oxidase, the last enzyme in the mitochondrial electron transport chain which drives oxidative phosphorylation. The respiratory chain contains 3 multisubunit complexes succinate dehydrogenase (complex II, CII), ubiquinol-cytochrome c oxidoreductase (cytochrome b-c1 complex, complex III, CIII) and cytochrome c oxidase (complex IV, CIV), that cooperate to transfer electrons derived from NADH and succinate to molecular oxygen, creating an electrochemical gradient over the inner membrane that drives transmembrane transport and the ATP synthase. Cytochrome c oxidase is the component of the respiratory chain that catalyzes the reduction of oxygen to water. Electrons originating from reduced cytochrome c in the intermembrane space (IMS) are transferred via the dinuclear copper A center (CU(A)) of subunit 2 and heme A of subunit 1 to the active site in subunit 1, a binuclear center (BNC) formed by heme A3 and copper B (CU(B)). The BNC reduces molecular oxygen to 2 water molecules using 4 electrons from cytochrome c in the IMS and 4 protons from the mitochondrial matrix. In Canis lupus familiaris (Dog), this protein is Cytochrome c oxidase subunit 2 (MT-CO2).